A 38-amino-acid chain; its full sequence is Cytochrome b559 subunit beta (38 aa).

The helical transmembrane segment at 13–29 (WLAVHALAVPTVFFLGS) threads the bilayer. His-17 lines the heme pocket.

The protein belongs to the PsbE/PsbF family. Heterodimer of an alpha subunit and a beta subunit. PSII is composed of 1 copy each of membrane proteins PsbA, PsbB, PsbC, PsbD, PsbE, PsbF, PsbH, PsbI, PsbJ, PsbK, PsbL, PsbM, PsbT, PsbX, PsbY, PsbZ, Psb30/Ycf12, at least 3 peripheral proteins of the oxygen-evolving complex and a large number of cofactors. It forms dimeric complexes. The cofactor is heme b.

The protein resides in the plastid. The protein localises to the chloroplast thylakoid membrane. In terms of biological role, this b-type cytochrome is tightly associated with the reaction center of photosystem II (PSII). PSII is a light-driven water:plastoquinone oxidoreductase that uses light energy to abstract electrons from H(2)O, generating O(2) and a proton gradient subsequently used for ATP formation. It consists of a core antenna complex that captures photons, and an electron transfer chain that converts photonic excitation into a charge separation. The sequence is that of Cytochrome b559 subunit beta from Ostreococcus tauri.